The chain runs to 776 residues: MQRPPPEDFSLKETKPHLGGGKVTGDKLTTTYDLVEQMQYLYVRVVKAKELPGKDLTGSCDPYVEVKLGNYRGTTRHFEKKSNPEWNQVFAFSKDRVQASYLEATVKDKDLVKDDLIGRVVFDLNEIPKRVPPDSPLAPQWYRLEDGKGQKVKGELMLAVWFGTQADEAFPEAWHSDAATVSGTDALANIRSKVYLSPKLWYLRVNVIEAQDLIPSDKGRYPEVFVKVIMGNQALRTRVSQSRSINPMWNEDLMFVVAEPFEEPLILSVEDRVAPNKDEVLGRCAVPLQYLDKRFDYRPVNSRWFNLEKHVIMEGGEKKEIKFASKIHMRICLEGGYHVLDESTHYSSDLRPTAKQLWKPNIGVLELGVLNATGLMPMKAKEGGRGTTDAYCVAKYGQKWIRTRTIIDSFTPRWNEQYTWEVFDPCTVVTVGVFDNCHLHGGDKNNGGGKDSRIGKVRIRLSTLEADRVYTHSYPLLVLHPSGVKKMGEIHLAVRFTCSSLLNMMYMYSMPLLPKMHYLHPLTVSQLDNLRHQATQIVSTRLTRAEPPLRKEVVEYMLDVGSHMWSMRRSKANFFRIMGVLSGIIAVGKWFEQICVWKNPITTVLIHILFIILVIYPELILPTIFLYLFLIGVWYYRWRPRHPPHMDTRLSHADSAHPDELDEEFDTFPTSRPSDIVRMRYDRLRSIAGRIQTVVGDLATQGERFQSLLSWRDPRATALFVLFCLIAAVILYITPFQVVAFAIGLYVLRHPRLRYKLPSVPLNFFRRLPARTDCML.

Basic and acidic residues predominate over residues 1-16 (MQRPPPEDFSLKETKP). The segment at 1 to 23 (MQRPPPEDFSLKETKPHLGGGKV) is disordered. 3 C2 domains span residues 22 to 142 (KVTG…PQWY), 181 to 305 (VSGT…SRWF), and 346 to 474 (YSSD…THSY). Residues D55, D61, D108, D110, and D115 each coordinate Ca(2+). 3 helical membrane-spanning segments follow: residues 577-597 (IMGV…ICVW), 608-628 (ILFI…FLYL), and 719-739 (LFVL…FQVV).

The protein belongs to the MCTP family. Interacts with and regulates subcellular localization and trafficking of STM. Ca(2+) is required as a cofactor. In terms of tissue distribution, highly expressed in both vegetative and inflorescence shoot apical meristems (SAMs). Accumulates in root meristems. Observed in flowers.

Its subcellular location is the endoplasmic reticulum membrane. The protein resides in the cytoplasm. It localises to the vesicle. It is found in the cell membrane. The protein localises to the endosome membrane. Its subcellular location is the golgi apparatus membrane. In terms of biological role, required for proliferation and differentiation of shoot stem cells in the shoot apical meristem (SAM), thus determining the appropriate balance between the maintenance of shoot stem cells and their differentiation into other aboveground plant parts via the control of subcellular localization and intercellular trafficking of STM in the shoot apex. Prevents intracellular trafficking of STM to the plasma membrane in cells in the peripheral shoot meristem region thus facilitating STM recycling to the nucleus to maintain stem cells. May function as a signaling molecule by regulating the trafficking of other regulators. This is FT-interacting protein 4 from Arabidopsis thaliana (Mouse-ear cress).